The sequence spans 478 residues: ATP-dependent RNA helicase DDX19A (478 aa).

At alanine 2 the chain carries N-acetylalanine. The interval 2-299 is N-terminal lobe; that stretch reads ATDSWALAVD…DPNIIKLKRE (298 aa). Lysine 26 participates in a covalent cross-link: Glycyl lysine isopeptide (Lys-Gly) (interchain with G-Cter in SUMO1); alternate. Lysine 26 is covalently cross-linked (Glycyl lysine isopeptide (Lys-Gly) (interchain with G-Cter in SUMO2); alternate). Residues 31-55 form a disordered region; sequence KPDTNGVIKTNATPEKTDEEEKEDR. An N-terminal helix region spans residues 54-67; it reads DRAAQSLLNKLIRS. Residues 91-119 carry the Q motif motif; it reads KSFEELRLKPQLLQGVYAMGFNRPSKIQE. ATP-binding positions include glutamine 118 and 137-144; that span reads SQSGTGKT. In terms of domain architecture, Helicase ATP-binding spans 124-294; the sequence is MMLAEPPQNL…QKVVPDPNII (171 aa). The DEAD box motif lies at 241–244; it reads DEAD. The interval 300-478 is C-terminal lobe; the sequence is EETLDTIKQY…DLDEIEKIAN (179 aa). A Helicase C-terminal domain is found at 305 to 473; it reads TIKQYYVLCN…RLDTDDLDEI (169 aa). ATP contacts are provided by arginine 428 and arginine 431.

Belongs to the DEAD box helicase family. DDX19/DBP5 subfamily.

Its subcellular location is the cytoplasm. The protein localises to the nucleus. It localises to the nucleoplasm. The enzyme catalyses ATP + H2O = ADP + phosphate + H(+). Its function is as follows. ATP-dependent RNA helicase involved in mRNA export from the nucleus. Rather than unwinding RNA duplexes, DDX19 functions as a remodeler of ribonucleoprotein particles, whereby proteins bound to nuclear mRNA are dissociated and replaced by cytoplasmic mRNA binding proteins. In Bos taurus (Bovine), this protein is ATP-dependent RNA helicase DDX19A (DDX19A).